Here is a 550-residue protein sequence, read N- to C-terminus: Glucose-6-phosphate isomerase (550 aa).

The Proton donor role is filled by glutamate 356. Residues histidine 387 and lysine 515 contribute to the active site.

This sequence belongs to the GPI family.

It localises to the cytoplasm. It catalyses the reaction alpha-D-glucose 6-phosphate = beta-D-fructose 6-phosphate. The protein operates within carbohydrate biosynthesis; gluconeogenesis. Its pathway is carbohydrate degradation; glycolysis; D-glyceraldehyde 3-phosphate and glycerone phosphate from D-glucose: step 2/4. In terms of biological role, catalyzes the reversible isomerization of glucose-6-phosphate to fructose-6-phosphate. The polypeptide is Glucose-6-phosphate isomerase (Aliivibrio fischeri (strain MJ11) (Vibrio fischeri)).